A 362-amino-acid chain; its full sequence is Probable dual-specificity RNA methyltransferase RlmN (362 aa).

Glu91 functions as the Proton acceptor in the catalytic mechanism. Residues 97-329 (QHYGLSVCVT…KKNGVNCVVR (233 aa)) form the Radical SAM core domain. Cys104 and Cys340 are joined by a disulfide. [4Fe-4S] cluster is bound by residues Cys111, Cys115, and Cys118. S-adenosyl-L-methionine is bound by residues 163-164 (GE), Ser195, 218-220 (SLH), and Asn296. The S-methylcysteine intermediate role is filled by Cys340.

This sequence belongs to the radical SAM superfamily. RlmN family. It depends on [4Fe-4S] cluster as a cofactor.

The protein localises to the cytoplasm. It carries out the reaction adenosine(2503) in 23S rRNA + 2 reduced [2Fe-2S]-[ferredoxin] + 2 S-adenosyl-L-methionine = 2-methyladenosine(2503) in 23S rRNA + 5'-deoxyadenosine + L-methionine + 2 oxidized [2Fe-2S]-[ferredoxin] + S-adenosyl-L-homocysteine. It catalyses the reaction adenosine(37) in tRNA + 2 reduced [2Fe-2S]-[ferredoxin] + 2 S-adenosyl-L-methionine = 2-methyladenosine(37) in tRNA + 5'-deoxyadenosine + L-methionine + 2 oxidized [2Fe-2S]-[ferredoxin] + S-adenosyl-L-homocysteine. Its function is as follows. Specifically methylates position 2 of adenine 2503 in 23S rRNA and position 2 of adenine 37 in tRNAs. This is Probable dual-specificity RNA methyltransferase RlmN from Streptococcus sanguinis (strain SK36).